The following is an 880-amino-acid chain: Phosphoinositide 3-kinase regulatory subunit 5 (880 aa).

The residue at position 1 (methionine 1) is an N-acetylmethionine. The tract at residues serine 25–leucine 101 is heterodimerization. Disordered regions lie at residues glycine 315–histidine 339, serine 389–arginine 416, arginine 454–glutamate 510, and histidine 565–glutamate 601. The segment covering glycine 318–glutamate 335 has biased composition (acidic residues). A phosphoserine mark is found at serine 458 and serine 507. Pro residues predominate over residues alanine 571 to aspartate 585. Residues proline 653–serine 753 form an interaction with beta-gamma G protein dimers region.

As to quaternary structure, heterodimer of a catalytic subunit (PIK3CG/p120) and a regulatory (PIK3R5a/p101) subunit. Interacts with beta-gamma G protein dimers. In terms of tissue distribution, ubiquitously expressed with high expression in fetal brain compared to adult brain. Abundant expression is observed in cerebellum, cerebral cortex, cerebral meninges, and vermis cerebelli.

Its subcellular location is the nucleus. The protein resides in the cytoplasm. It localises to the cell membrane. With respect to regulation, greatly activated by G gamma proteins. Its function is as follows. Regulatory subunit of the PI3K gamma complex. Required for recruitment of the catalytic subunit to the plasma membrane via interaction with beta-gamma G protein dimers. Required for G protein-mediated activation of PIK3CG. The polypeptide is Phosphoinositide 3-kinase regulatory subunit 5 (PIK3R5) (Homo sapiens (Human)).